An 88-amino-acid chain; its full sequence is LYR motif-containing protein 2 (88 aa).

Residues 1 to 19 constitute a mitochondrion transit peptide; it reads MAVSRLPPAALSLKQFLQR.

It belongs to the complex I LYR family.

Its subcellular location is the mitochondrion. In terms of biological role, involved in efficient integration of the N-module into mitochondrial respiratory chain complex I. This is LYR motif-containing protein 2 (lyrm2) from Danio rerio (Zebrafish).